The primary structure comprises 372 residues: 3-galactosyl-N-acetylglucosaminide 4-alpha-L-fucosyltransferase FUT3 (372 aa).

Residues 1–15 are Cytoplasmic-facing; it reads MDPLGAAKTQWPWRR. Residues 16 to 34 form a helical; Signal-anchor for type II membrane protein membrane-spanning segment; sequence CLAALLFQLLVAVCFFSYL. Topologically, residues 35-372 are lumenal; it reads RVSRDDATGS…MVRSIAAWFT (338 aa). A disordered region spans residues 40-68; the sequence is DATGSPRPGLMAVEPVTGAPGGSSRQDTT. Asparagine 165 and asparagine 196 each carry an N-linked (GlcNAc...) asparagine glycan.

It belongs to the glycosyltransferase 10 family. In terms of processing, glycosylated.

It localises to the golgi apparatus. Its subcellular location is the golgi stack membrane. It catalyses the reaction a beta-D-galactosyl-(1-&gt;3)-N-acetyl-beta-D-glucosaminyl derivative + GDP-beta-L-fucose = a beta-D-galactosyl-(1-&gt;3)-[alpha-L-fucosyl-(1-&gt;4)]-N-acetyl-beta-D-glucosaminyl derivative + GDP + H(+). It carries out the reaction an N-acetyl-alpha-neuraminyl-(2-&gt;3)-beta-D-galactosyl-(1-&gt;4)-N-acetyl-beta-D-glucosaminyl derivative + GDP-beta-L-fucose = an alpha-Neu5Ac-(2-&gt;3)-beta-D-Gal-(1-&gt;4)-[alpha-L-Fuc-(1-&gt;3)]-beta-D-GlcNAc derivative + GDP + H(+). The enzyme catalyses a beta-D-galactosyl-(1-&gt;4)-N-acetyl-beta-D-glucosaminyl derivative + GDP-beta-L-fucose = a beta-D-galactosyl-(1-&gt;4)-[alpha-L-fucosyl-(1-&gt;3)]-N-acetyl-beta-D-glucosaminyl derivative + GDP + H(+). The catalysed reaction is an alpha-Neu5Ac-(2-&gt;3)-beta-D-Gal-(1-&gt;4)-beta-D-GlcNAc-(1-&gt;3)-beta-D-Gal-(1-&gt;4)-[alpha-L-Fuc-(1-&gt;3)]-beta-D-GlcNAc derivative + GDP-beta-L-fucose = an alpha-Neu5Ac-(2-&gt;3)-beta-D-Gal-(1-&gt;4)-[alpha-L-Fuc-(1-&gt;3)]-beta-D-GlcNAc-(1-&gt;3)-beta-D-Gal-(1-&gt;4)-[alpha-L-Fuc-(1-&gt;3)]-beta-D-GlcNAc derivative + GDP + H(+). It catalyses the reaction Lc4Cer + GDP-beta-L-fucose = a lactoside III(4)-a-Fuc-Lc4Cer + GDP + H(+). It carries out the reaction a beta-D-Gal-(1-&gt;3)-beta-D-GlcNAc-(1-&gt;3)-beta-D-Gal-(1-&gt;4)-beta-D-Glc-(1&lt;-&gt;1')-Cer(d18:1(4E)) + GDP-beta-L-fucose = a III(4)-a-Fuc-Lc4Cer(d18:1(4E)) + GDP + H(+). The enzyme catalyses N-acetyl-alpha-neuraminosyl-(2-&gt;3)-beta-D-galactosyl-(1-&gt;3)-[N-acetyl-alpha-neuraminosyl-(2-&gt;6)]-N-acetyl-beta-D-glucosaminyl-(1-&gt;3)-beta-D-galactosyl-(1-&gt;4)-beta-D-glucosyl-(1&lt;-&gt;1')-N-acyl-sphing-4-enine + GDP-beta-L-fucose = N-acetyl-alpha-neuraminosyl-(2-&gt;3)-beta-D-galactosyl-(1-&gt;3)-alpha-L-fucosyl-(1-&gt;4)-[N-acetyl-alpha-neuraminosyl-(2-&gt;6)-N-acetyl-beta-D-glucosaminyl-(1-&gt;3)]-beta-D-galactosyl-(1-&gt;4)-beta-D-glucosyl-(1&lt;-&gt;1')-N-acyl-sphing-4-enine + GDP + H(+). The catalysed reaction is N-acetyl-alpha-neuraminosyl-(2-&gt;3)-beta-D-galactosyl-(1-&gt;3)-N-acetyl-beta-D-glucosaminyl-(1-&gt;3)-beta-D-galactosyl-(1-&gt;4)-beta-D-glucosyl-(1&lt;-&gt;1')-N-acyl-sphing-4-enine + GDP-beta-L-fucose = N-acetyl-alpha-neuraminosyl-(2-&gt;3)-beta-D-galactosyl-(1-&gt;3)-alpha-L-fucosyl-(1-&gt;4)-[N-acetyl-beta-D-glucosaminyl-(1-&gt;3)]-beta-D-galactosyl-(1-&gt;4)-beta-D-glucosyl-(1&lt;-&gt;1')-N-acyl-sphing-4-enine + GDP + H(+). It catalyses the reaction beta-D-galactosyl-(1-&gt;3)-N-acetyl-D-glucosamine + GDP-beta-L-fucose = beta-D-galactosyl-(1-&gt;3)-[alpha-L-fucosyl-(1-&gt;4)]-N-acetyl-D-glucosamine + GDP + H(+). It carries out the reaction alpha-L-Fuc-(1-&gt;2)-beta-D-Gal-(1-&gt;3)-D-GlcNAc + GDP-beta-L-fucose = alpha-L-Fuc-(1-&gt;2)-beta-D-Gal-(1-&gt;3)-[alpha-L-Fuc-(1-&gt;4)]-D-GlcNAc + GDP + H(+). The enzyme catalyses alpha-L-Fuc-(1-&gt;2)-beta-D-Gal-(1-&gt;4)-D-GlcNAc + GDP-beta-L-fucose = alpha-L-Fuc-(1-&gt;2)-beta-D-Gal-(1-&gt;4)-[alpha-L-Fuc-(1-&gt;3)]-D-GlcNAc + GDP + H(+). The catalysed reaction is beta-D-galactosyl-(1-&gt;4)-N-acetyl-D-glucosamine + GDP-beta-L-fucose = beta-D-galactosyl-(1-&gt;4)-[alpha-L-fucosyl-(1-&gt;3)]-N-acetyl-D-glucosamine + GDP + H(+). It catalyses the reaction lactose + GDP-beta-L-fucose = beta-D-galactosyl-(1-&gt;4)-[alpha-L-fucosyl-(1-&gt;3)]-D-glucose + GDP + H(+). It carries out the reaction an alpha-Neu5Ac-(2-&gt;3)-beta-D-Gal-(1-&gt;3)-D-GlcNAc derivative + GDP-beta-L-fucose = an alpha-Neu5Ac-(2-&gt;3)-beta-D-Gal-(1-&gt;3)-[alpha-L-Fuc-(1-&gt;4)]-beta-D-GlcNAc derivative + GDP + H(+). The protein operates within protein modification; protein glycosylation. Catalyzes the transfer of L-fucose, from a guanosine diphosphate-beta-L-fucose, to both the subterminal N-acetyl glucosamine (GlcNAc) of type 1 chain (beta-D-Gal-(1-&gt;3)-beta-D-GlcNAc) glycolipids and oligosaccharides via an alpha(1,4) linkage, and the subterminal glucose (Glc) or GlcNAc of type 2 chain (beta-D-Gal-(1-&gt;4)-beta-D-GlcNAc) oligosaccharides via an alpha(1,3) linkage, independently of the presence of terminal alpha-L-fucosyl-(1,2) moieties on the terminal galactose of these acceptors and participates in the blood groups Lewis determination and expression of Lewis a (Le(a)), lewis b (Le(b)), Lewis x/SSEA-1 (Le(x)) and lewis y (Le(y)) antigens. Also catalyzes the transfer of L-fucose to subterminal GlcNAc of sialyl- and disialyl-lactotetraosylceramide to produce sialyl Lewis a (sLe(a)) and disialyl Lewis a via an alpha(1,4) linkage and therefore may regulate cell surface sialyl Lewis a expression and consequently regulates adhesive properties to E-selectin, cell proliferation and migration. Catalyzes the transfer of an L-fucose to 3'-sialyl-N-acetyllactosamine by an alpha(1,3) linkage, which allows the formation of sialyl-Lewis x structure and therefore may regulate the sialyl-Lewis x surface antigen expression and consequently adhesive properties to E-selectin. Prefers type 1 chain over type 2 acceptors. Type 1 tetrasaccharide is a better acceptor than type 1 disaccharide suggesting that a beta anomeric configuration of GlcNAc in the substrate is preferred. Lewis-positive (Le(+)) individuals have an active enzyme while Lewis-negative (Le(-)) individuals have an inactive enzyme. The chain is 3-galactosyl-N-acetylglucosaminide 4-alpha-L-fucosyltransferase FUT3 from Pongo pygmaeus (Bornean orangutan).